Consider the following 1105-residue polypeptide: Integrator complex subunit 2 (1105 aa).

Residues 822–842 traverse the membrane as a helical segment; that stretch reads FVFCSPYLLMILLRILKGSLA.

It belongs to the Integrator subunit 2 family. Belongs to the multiprotein complex Integrator, at least composed of IntS1, IntS2, IntS3, IntS4, omd/IntS5, IntS6, defl/IntS7, IntS8, IntS9, IntS10, IntS11, IntS12, asun/IntS13, IntS14 and IntS15. The core complex associates with protein phosphatase 2A subunits mts/PP2A and Pp2A-29B, to form the Integrator-PP2A (INTAC) complex.

The protein resides in the nucleus membrane. It localises to the nucleus. Component of the integrator complex, a multiprotein complex that terminates RNA polymerase II (Pol II) transcription in the promoter-proximal region of genes. The integrator complex provides a quality checkpoint during transcription elongation by driving premature transcription termination of transcripts that are unfavorably configured for transcriptional elongation: the complex terminates transcription by (1) catalyzing dephosphorylation of the C-terminal domain (CTD) of Pol II subunit Polr2A/Rbp1 and Spt5, and (2) degrading the exiting nascent RNA transcript via endonuclease activity. The integrator complex is also involved in the 3'-end processing of the U7 snRNA, and also the spliceosomal snRNAs U1, U2, U4 and U5. This Drosophila melanogaster (Fruit fly) protein is Integrator complex subunit 2.